The following is a 450-amino-acid chain: Transcription factor SCREAM2 (450 aa).

Disordered regions lie at residues 1-47 (MNSD…NQND), 207-231 (RQSS…YERE), and 244-265 (GLNY…KGMP). The segment covering 209–220 (SSSSKMCNSESS) has biased composition (low complexity). Positions 221–230 (SEMRKSSYER) are enriched in basic and acidic residues. Positions 263–312 (GMPAKNLMAERRRRKKLNDRLYMLRSVVPKISKMDRASILGDAIDYLKEL) constitute a bHLH domain. The ACT domain maps to 378–450 (NIHMFCGRRP…LDTAGYAGLV (73 aa)).

In terms of assembly, homodimer. Heterodimers with SPCH, MUTE, and FAMA. As to expression, expressed constitutively in roots, leaves, stems, and flowers. Broad expression within stomatal cell lineages of leaf epidermis, except in mature guard-cells.

It is found in the nucleus. Its function is as follows. Mediates stomatal differentiation in the epidermis probably by controlling successive roles of SPCH, MUTE, and FAMA. Functions as a dimer with SPCH during stomatal initiation. The chain is Transcription factor SCREAM2 (SCRM2) from Arabidopsis thaliana (Mouse-ear cress).